The chain runs to 743 residues: MLKTDSLDFHSYLPPYRSLINPNARYDYRTHSLIPLTQNDLNLLRIAFQKKKEAPPSAFKMKYKSLLSDVSRTISMRLSNSNLLSSSSANNNNVLLSPPPSSSSTLSTPCGNILNRAGTTSSNISKINNLSQNQTQNQLPLFPAELHIKNLPVEILDYIFYLVDDNLDYKSCMYTCKLFYFLAKPYYYENLVFTSTYRFAQFVTYLRVNSEVGQYVQSIDLSGIKPGYDEDEQEEGQEENAENGEEENGGGARDPQYLLGEIADNPHHERVDQFPRGKILAGWRDWKFKNNPLYTIHPSPSLTKIASNSQFSNVSSKSSRSTSSKSSSSTTKKFVKPFRYFKSRKRKMSYSGTTKLERKSPRLEQLQLDQYSSNWNKRVNSHPLINKFLLHYSTSKDLPIGYILHMINLCPNIVSLNLGNLSLSTDYEISRSTIHKYQNFDLINNYPKDLIYKVDNIMRLNDVDDVYSIDGSILRFGNINSGSSGSNWERNGSSSNNRILFKSNQSIASTASSVYSVTTFSKPIRKYNSLLPPLPQTVADISYLNKGDGKVYLSDLNLKEINSAYLKKINEDEILSAIINVHGKRLIEYDTSLYQIPKPLNVDIAGTLKYINLSSMIWLNRKLIEKFLTRLLTKKSPELDMYGICYTDEFFDSDEQESDDDYEDSDDEEQRQCPIIYKQNLVIDFTDSGMYKSLPWAKRIDLNSFEGCQLANKIINNDLMTPQEQALRRERRRRGAIAANYLA.

Positions 145–191 (ELHIKNLPVEILDYIFYLVDDNLDYKSCMYTCKLFYFLAKPYYYENL) constitute an F-box domain. Disordered regions lie at residues 224–257 (IKPGYDEDEQEEGQEENAENGEEENGGGARDPQY) and 311–330 (FSNVSSKSSRSTSSKSSSST). Residues 229-248 (DEDEQEEGQEENAENGEEEN) are compositionally biased toward acidic residues.

Functionally, F-box protein probably involved in ubiquitin conjugation pathway. The protein is F-box protein COS111 (COS111) of Candida albicans (strain SC5314 / ATCC MYA-2876) (Yeast).